Here is a 596-residue protein sequence, read N- to C-terminus: Estrogen receptor (596 aa).

The tract at residues 1-185 (MTMTLHTKAS…AMESAKETRY (185 aa)) is modulating (transactivation AF-1); mediates interaction with MACROD1. Serine 10 carries an O-linked (GlcNAc) serine glycan. Residues 36–48 (ERPLGEVYMDSSK) are required for interaction with NCOA1. An interaction with DDX5; self-association region spans residues 36 to 175 (ERPLGEVYMD…LASTSDKGSM (140 aa)). A phosphoserine; by CDK2 mark is found at serine 104 and serine 106. At serine 119 the chain carries Phosphoserine. The disordered stretch occupies residues 144-175 (EAGPPAYYRPNSDNRRQGGRERLASTSDKGSM). Residues 155-166 (SDNRRQGGRERL) show a composition bias toward basic and acidic residues. Serine 168 is modified (phosphoserine; by CK2). 2 NR C4-type zinc fingers span residues 186–206 (CAVCNDYASGYHYGVWSCEGC) and 222–246 (CPATNQCTIDKNRRKSCQACRLRKC). The nuclear receptor DNA-binding region spans 186 to 251 (CAVCNDYASG…RLRKCYEVGM (66 aa)). The mediates interaction with DNTTIP2 stretch occupies residues 186–311 (CAVCNDYASG…TKKNSPVLSL (126 aa)). A hinge region spans residues 252–311 (MKGGIRKDRRGGRMLKHKRQRDDGEGRNEAVPSGDMRAANLWPSPIMIKHTKKNSPVLSL). Residues 259 to 270 (DRRGGRMLKHKR) are compositionally biased toward basic residues. A disordered region spans residues 259–285 (DRRGGRMLKHKRQRDDGEGRNEAVPSG). Arginine 261 carries the post-translational modification Asymmetric dimethylarginine; by PRMT1. The tract at residues 263 to 596 (GRMLKHKRQR…GEAENFPSTV (334 aa)) is interaction with AKAP13. The interval 265–595 (MLKHKRQRDD…TGEAENFPST (331 aa)) is self-association. Positions 312-548 (TADQMISALL…DLLLEMLDAH (237 aa)) constitute an NR LBD domain. The interval 312–595 (TADQMISALL…TGEAENFPST (284 aa)) is transactivation AF-2. 17beta-estradiol contacts are provided by glutamate 354 and arginine 395. Residue cysteine 448 is the site of S-palmitoyl cysteine attachment. 17beta-estradiol is bound at residue histidine 525. Position 538 is a phosphotyrosine; by Tyr-kinases (tyrosine 538). O-linked (GlcNAc) threonine glycosylation is present at threonine 572.

The protein belongs to the nuclear hormone receptor family. NR3 subfamily. As to quaternary structure, binds DNA as a homodimer. Can form a heterodimer with ESR2. Interacts with coactivator NCOA5. Interacts with PELP1, the interaction is enhanced by 17-beta-estradiol; the interaction increases ESR1 transcriptional activity. Interacts with NCOA7; the interaction is ligand-inducible. Interacts with AKAP13, CUEDC2, HEXIM1, KDM5A, MAP1S, SMARD1, and UBE1C. Interacts with MUC1; the interaction is stimulated by 7 beta-estradiol (E2) and enhances ESR1-mediated transcription. Interacts with DNTTIP2, and UIMC1. Interacts with KMT2D/MLL2. Interacts with ATAD2; the interaction is enhanced by estradiol. Interacts with KIF18A and LDB1. Interacts with RLIM (via its C-terminus). Interacts with MACROD1. Interacts with SH2D4A and PLCG. Interacts with SH2D4A; the interaction blocks binding to PLCG and inhibits estrogen-induced cell proliferation. Interacts with DYNLL1. Interacts with CCDC62; the interaction requires estradiol and appears to enhance the transcription of target genes. Interacts with NR2C1; the interaction prevents homodimerization of ESR1 and suppresses its transcriptional activity and cell growth. Interacts with DNAAF4. Interacts with PRMT2. Interacts with RBFOX2. Interacts with EP300; the interaction is estrogen-dependent and enhanced by CITED1. Interacts with CITED1; the interaction is estrogen-dependent. Interacts with FAM120B, FOXL2, PHB2 and SLC30A9. Interacts with coactivators NCOA3 and NCOA6. Interacts with STK3/MST2 only in the presence of SAV1 and vice-versa. Binds to CSNK1D. Interacts with NCOA2; NCOA2 can interact with ESR1 AF-1 and AF-2 domains simultaneously and mediate their transcriptional synergy. Interacts with DDX5. Interacts with NCOA1; the interaction seems to require a self-association of N-terminal and C-terminal regions. Interacts with ZNF366, DDX17, NFKB1, RELA, SP1 and SP3. Interacts with NRIP1. Interacts with GPER1; the interaction occurs in an estrogen-dependent manner. Interacts with CLOCK and the interaction is stimulated by estrogen. Interacts with TRIP4 (ufmylated); estrogen dependent. Interacts with LMTK3; the interaction phosphorylates ESR1 (in vitro) and protects it against proteasomal degradation. Interacts with CCAR2 (via N-terminus) in a ligand-independent manner. Interacts with ZFHX3. Interacts with SFR1 in a ligand-dependent and -independent manner. Interacts with DCAF13, LATS1 and DCAF1; regulates ESR1 ubiquitination and ubiquitin-mediated proteasomal degradation. Interacts (via DNA-binding domain) with POU4F2 (C-terminus); this interaction increases the estrogen receptor ESR1 transcriptional activity in a DNA- and ligand 17-beta-estradiol-independent manner. Interacts with ESRRB isoform 1. Interacts with UBE3A and WBP2. Interacts with GTF2B. Interacts with RBM39. In the absence of hormonal ligand, interacts with TACC1. Interacts with PI3KR1 or PI3KR2 and PTK2/FAK1. Interacts with SRC. Interacts with BAG1; the interaction is promoted in the absence of estradiol (17-beta-estradiol/E2). Interacts with and ubiquitinated by STUB1; the interaction is promoted in the absence of estradiol (17-beta-estradiol/E2). Interacts with NEDD8. In terms of processing, glycosylated; contains N-acetylglucosamine, probably O-linked. Ubiquitinated; regulated by LATS1 via DCAF1 it leads to ESR1 proteasomal degradation. Deubiquitinated by OTUB1. Ubiquitinated by STUB1/CHIP; in the CA1 hippocampal region following loss of endogenous circulating estradiol (17-beta-estradiol/E2). Ubiquitinated by UBR5, leading to its degradation: UBR5 specifically recognizes and binds ligand-bound ESR1 when it is not associated with coactivators (NCOAs). In presence of NCOAs, the UBR5-degron is not accessible, preventing its ubiquitination and degradation. Post-translationally, phosphorylated by cyclin A/CDK2 and CK1. Phosphorylation probably enhances transcriptional activity. Dephosphorylation at Ser-119 by PPP5C inhibits its transactivation activity. Phosphorylated by LMTK3 (in vitro). In terms of processing, palmitoylated at Cys-448 by ZDHHC7 and ZDHHC21. Palmitoylation is required for plasma membrane targeting and for rapid intracellular signaling via ERK and AKT kinases and cAMP generation, but not for signaling mediated by the nuclear hormone receptor. Dimethylated by PRMT1 at Arg-261. The methylation may favor cytoplasmic localization. Demethylated by JMJD6 at Arg-261.

Its subcellular location is the nucleus. It is found in the cytoplasm. It localises to the golgi apparatus. The protein resides in the cell membrane. Functionally, nuclear hormone receptor. The steroid hormones and their receptors are involved in the regulation of eukaryotic gene expression and affect cellular proliferation and differentiation in target tissues. Ligand-dependent nuclear transactivation involves either direct homodimer binding to a palindromic estrogen response element (ERE) sequence or association with other DNA-binding transcription factors, such as AP-1/c-Jun, c-Fos, ATF-2, Sp1 and Sp3, to mediate ERE-independent signaling. Ligand binding induces a conformational change allowing subsequent or combinatorial association with multiprotein coactivator complexes through LXXLL motifs of their respective components. Mutual transrepression occurs between the estrogen receptor (ER) and NF-kappa-B in a cell-type specific manner. Decreases NF-kappa-B DNA-binding activity and inhibits NF-kappa-B-mediated transcription from the IL6 promoter and displace RELA/p65 and associated coregulators from the promoter. Recruited to the NF-kappa-B response element of the CCL2 and IL8 promoters and can displace CREBBP. Present with NF-kappa-B components RELA/p65 and NFKB1/p50 on ERE sequences. Can also act synergistically with NF-kappa-B to activate transcription involving respective recruitment adjacent response elements; the function involves CREBBP. Can activate the transcriptional activity of TFF1. Also mediates membrane-initiated estrogen signaling involving various kinase cascades. Essential for MTA1-mediated transcriptional regulation of BRCA1 and BCAS3. Maintains neuronal survival in response to ischemic reperfusion injury when in the presence of circulating estradiol (17-beta-estradiol/E2). The polypeptide is Estrogen receptor (ESR1) (Bos taurus (Bovine)).